We begin with the raw amino-acid sequence, 562 residues long: MQFDYIIIGAGSAGNVLATRLTEDPNTTVLLLEAGGPDYRFDFRTQMPAALAFPLQGKRYNWAYETEPEPFMNNRRMECGRGKGLGGSSLINGMCYIRGNALDLDNWAQEPGLENWSYLDCLPYYRKAETRDVGENDYHGGDGPVSVTTSKPGVNPLFEAMIEAGVQAGYPRTDDLNGYQQEGFGPMDRTVTPHGRRASTARGYLDQAKSRPNLTIRTHAMTDHIFFDGKRAVGVEWLEGDSTIPTRAAANKEVLLCAGAIASPQILQRSGVGNAELLAEFDIPLVHELPGVGENLQDHLEMYLQYECKEPVSLYPALQWWNQPKIGAEWLFGGTGVGASNHFEAGGFIRSREEFAWPNIQYHFLPVAINYNGSNAVKEHGFQCHVGSMRSPSRGHVRIKSRDPHQHPAILFNYMSHEQDWQEFRDAIRITREIMHQPALDQYRGREISPGVECQTDEQLDEFVRNHAETAFHPCGTCKMGYDEMAVVDAEGRVHGLEGLRVVDASIMPQIITGNLNATTIMIGEKMADMIRGKDALPRSTARYFVANGMPVRAKKMSRDVN.

Residue D4–E33 participates in FAD binding. H473 (proton acceptor) is an active-site residue.

Belongs to the GMC oxidoreductase family. FAD is required as a cofactor.

It carries out the reaction choline + A = betaine aldehyde + AH2. The catalysed reaction is betaine aldehyde + NAD(+) + H2O = glycine betaine + NADH + 2 H(+). It functions in the pathway amine and polyamine biosynthesis; betaine biosynthesis via choline pathway; betaine aldehyde from choline (cytochrome c reductase route): step 1/1. Its function is as follows. Involved in the biosynthesis of the osmoprotectant glycine betaine. Catalyzes the oxidation of choline to betaine aldehyde and betaine aldehyde to glycine betaine at the same rate. This Escherichia coli O45:K1 (strain S88 / ExPEC) protein is Oxygen-dependent choline dehydrogenase.